Here is an 886-residue protein sequence, read N- to C-terminus: Vam6/Vps39-like protein (886 aa).

The CNH domain maps to 15–294; that stretch reads PLQIDCLAAW…RFITSGGSNI (280 aa). Residues 573–750 form a CHCR repeat; that stretch reads FTEDLPEVES…LLRMYLSPPS (178 aa).

It belongs to the VAM6/VPS39 family. In terms of assembly, homooligomer. Interacts with TGFBR2 and, less efficiently, with TGFBR1; interaction with TGFBR2 is independent of the receptor kinase activity and of the presence of TGF-beta. Also interacts with ACVR2B, but not with BMPR2. Interacts with SMAD4, preferentially following TGF-beta treatment. Does not interact with SAMD2 or SMAD3. Component of the homotypic fusion and vacuole protein sorting (HOPS) complex; the core of which composed of the class C Vps proteins VPS11, VPS16, VPS18 and VPS33A, is associated with VPS39 and VPS41. Interacts with PLEKHM2; involved in VPS39 recruitment to ARL8B-containing lysosomes. Associates with adapter protein complex 3 (AP-3) and clathrin:AP-3 complexes. Interacts with STX17; this interaction is increased in the absence of TMEM39A. Interacts with RAB7, RAB2A and RAB2B. Interacts with RAB2A (GTP-bound); the interaction contributes to obtaining a functional HOPS complex that promotes autophagosome-lysosome membrane fusion driven by STX17-SNAP29-VAMP8. Interacts with RAB39A (GTP-bound) and RAB39B (GTP-bound); interaction with RAB39A contributes to obtaining a functional HOPS complex. As to quaternary structure, (Microbial infection) Interacts with SARS coronavirus-2/SARS-CoV-2 ORF3A protein; the interaction is direct and sequestrates VPS39, thereby preventing HOPS complex from interacting with the autophagosomal SNARE protein STX17. ORF3A enhances the interaction of VPS39 with VPS11 and VPS18, while its interaction with the VPS16:VPS33A module is attenuated. In terms of tissue distribution, widely expressed, with highest levels in heart, skeletal muscle, kidney, pancreas, brain, placenta and spleen.

The protein localises to the cytoplasm. It localises to the lysosome membrane. Its subcellular location is the late endosome membrane. Functionally, regulator of TGF-beta/activin signaling, inhibiting SMAD3- and activating SMAD2-dependent transcription. Acts by interfering with SMAD3/SMAD4 complex formation, this would lead to inhibition of SMAD3-dependent transcription and relieve SMAD3 inhibition of SMAD2-dependent promoters, thus increasing SMAD2-dependent transcription. Does not affect TGF-beta-induced SMAD2 or SMAD3 phosphorylation, nor SMAD2/SMAD4 complex formation. In terms of biological role, plays a role in vesicle-mediated protein trafficking to lysosomal compartments including the endocytic membrane transport and autophagic pathways. Acts as a component of the HOPS endosomal tethering complex. This complex is proposed to be involved in the Rab5-to-Rab7 endosome conversion probably implicating MON1A/B, and via binding SNAREs and SNARE complexes to mediate tethering and docking events during SNARE-mediated membrane fusion. The HOPS complex is proposed to be recruited to Rab7 on the late endosomal membrane and to regulate late endocytic, phagocytic and autophagic traffic towards lysosomes. Involved in homotypic vesicle fusions between late endosomes and in heterotypic fusions between late endosomes and lysosomes. Required for fusion of endosomes and autophagosomes with lysosomes. The polypeptide is Vam6/Vps39-like protein (Homo sapiens (Human)).